The chain runs to 76 residues: MINMGGKTLIINWENPLNRDAYTEIGKLMVLVLPYVVNIEIVDTEGCIMEIDDTIEDEIKELSRFLKYVEVSFAEE.

This is an uncharacterized protein from Sulfolobus islandicus filamentous virus (isolate Iceland/Hveragerdi) (SIFV).